The chain runs to 760 residues: MSTAAAARPVAGTGLREKTAASLVNSFRLASVTQRLRYHIQDGAKVDPKEFQICCISFAKGIDFAIANNDIPKKVEEFPWLLKQLCRHGTDVYTKTALMVLMISVKHACHLGWFSDSESQELIALADEIRTCFGSSGSTSPGIKSPGSTFSQIMERFYPFVKLGHVLVSFEVKAGYTMLAHDFYISKNMPHSLQEKIRLFVAQTDNIDTSACISNPPEVSFLLNGKGVEKRVNIAMDTGPQLPTNVTAQLKYGTNLLQVMGNFKGNYIIIIAFTGLVVPPEKPVLKDYLQSGVIEASPDSDIIEGPSRVSLSCPISRKRIKLPVKGQLCKHLQCFDFSNYVHINMRNPTWRCPHCNQPVCYPDIRLDQNMAKILKDVEHNAADVIIDAGGTWKVTKNTGETPEPVREIIHDLEDPMSLLNSGPVVFDLTGDDDAELEVFGDNKVEDRKPCMSDAQGQSNNNNTNKHPSNDDYSSIFDISDVIALDPEILSALGNTAPQPHQASNTGTGQQYSNLSQIPMSIDPMPVPVPFSQTPSPRDRPATTSTVFTIPNPSPQYSQVHASPVTPTGTYLGRTTSPRWNQTYQSQAPPMTTPYTSRKVSVPVTSQSPANVSSFVQSQHVPRVLSQPNNYGVRGLTSSHASTSRQHPSGPTVQSVSRLSDLVDVDLTVPDTSNWRPRMRGSLVPGSHSTALDHMIIRPSQQSQTSTRLNSSQPVQTPSVQTSQAQSPFTTAAYRTETVLGNRNHPVPAPPGIVRPTGPTS.

The interval 143-301 is interacting domain (IND), required for interaction with MOM1 and PIAL1; it reads IKSPGSTFSQ…GVIEASPDSD (159 aa). The SP-RING-type zinc-finger motif lies at 298-379; that stretch reads PDSDIIEGPS…MAKILKDVEH (82 aa). Positions 329, 331, 352, and 355 each coordinate Zn(2+). A compositionally biased stretch (basic and acidic residues) spans 440–450; sequence GDNKVEDRKPC. Disordered stretches follow at residues 440–471, 492–522, 631–657, and 699–760; these read GDNK…SNDD, LGNT…MSID, GVRG…SVSR, and SQQS…GPTS. Composition is skewed to polar residues over residues 492 to 518, 631 to 653, and 699 to 729; these read LGNT…SQIP, GVRG…PTVQ, and SQQS…SPFT.

The protein belongs to the PIAL protein ligase family. As to quaternary structure, homodimer. Interacts with MOM1 and PIAL1 to form a high molecular mass complex which mediates transcriptional silencing at heterochromatin regions. As to expression, expressed in leaves, stems and flowers, and, at low levels, in siliques and old leaves.

It is found in the nucleus. The protein operates within protein modification; protein sumoylation. Functionally, together with MOM1 and PIAL1, regulates transcriptional gene silencing (TGS) independently of changes in DNA methylation. E4-type SUMO ligase that promotes SUMO chain formation in a SCE1-dependent manner and thus contributes to a pathway for proteolytic removal of sumoylation substrates. Involved in stress responses and sulfur metabolism. The protein is E4 SUMO-protein ligase PIAL2 of Arabidopsis thaliana (Mouse-ear cress).